The chain runs to 1035 residues: DNA polymerase I B, mitochondrial (1035 aa).

Residues 1–42 constitute a mitochondrion transit peptide; it reads MAVAPPLPPAPARLLRRWQGSSPWLSSSFGRTRYFSRPAFAA. The interval 100-124 is disordered; it reads TNGTTPLRVGNLRHDPSEDIRSSNY. The span at 111 to 120 shows a compositional bias: basic and acidic residues; it reads LRHDPSEDIR. Residues 317-478 form the 3'-5' exonuclease domain; sequence FGNGKTCIWV…LYESLKNKLE (162 aa). The tract at residues 699–1032 is polymerase; the sequence is HAIAALCEVF…VDAKYAKSWY (334 aa).

The protein belongs to the DNA polymerase type-A family.

The protein localises to the mitochondrion. It catalyses the reaction DNA(n) + a 2'-deoxyribonucleoside 5'-triphosphate = DNA(n+1) + diphosphate. Its activity is regulated as follows. Not inhibited by aphidicolin. In terms of biological role, in addition to polymerase activity, this DNA polymerase exhibits 5'-3' exonuclease activity. May be required for DNA replication and accumulation in mitochondria. The chain is DNA polymerase I B, mitochondrial from Oryza sativa subsp. japonica (Rice).